Reading from the N-terminus, the 360-residue chain is DNA primase large subunit PriL (360 aa).

[4Fe-4S] cluster contacts are provided by Cys237, Cys309, Cys318, and Cys325. The segment at Asp340 to Asp360 is disordered.

This sequence belongs to the eukaryotic-type primase large subunit family. Heterodimer of a small subunit (PriS) and a large subunit (PriL). Requires [4Fe-4S] cluster as cofactor.

In terms of biological role, regulatory subunit of DNA primase, an RNA polymerase that catalyzes the synthesis of short RNA molecules used as primers for DNA polymerase during DNA replication. Stabilizes and modulates the activity of the small subunit, increasing the rate of DNA synthesis, and conferring RNA synthesis capability. The DNA polymerase activity may enable DNA primase to also catalyze primer extension after primer synthesis. May also play a role in DNA repair. This is DNA primase large subunit PriL from Halobacterium salinarum (strain ATCC 29341 / DSM 671 / R1).